Reading from the N-terminus, the 467-residue chain is Bifunctional protein GlmU (467 aa).

Residues 1-229 are pyrophosphorylase; the sequence is MEKNTIILAA…FSESMGVNDR (229 aa). UDP-N-acetyl-alpha-D-glucosamine is bound by residues 8–11, Lys-22, Gln-72, 77–78, 100–102, Gly-139, Glu-154, Asn-169, and Asn-227; these read LAAG, GT, and SGD. Asp-102 contributes to the Mg(2+) binding site. Asn-227 contacts Mg(2+). Residues 230–250 form a linker region; the sequence is LALSKATKVMQRRINEEHMVN. Residues 251-467 are N-acetyltransferase; the sequence is GVTIIDPENT…ALKAEEENNK (217 aa). The UDP-N-acetyl-alpha-D-glucosamine site is built by Arg-332 and Lys-350. His-362 acts as the Proton acceptor in catalysis. UDP-N-acetyl-alpha-D-glucosamine is bound by residues Tyr-365 and Asn-376. Residues 385–386, Ser-404, Ala-422, and Arg-439 contribute to the acetyl-CoA site; that span reads NY.

In the N-terminal section; belongs to the N-acetylglucosamine-1-phosphate uridyltransferase family. It in the C-terminal section; belongs to the transferase hexapeptide repeat family. As to quaternary structure, homotrimer. It depends on Mg(2+) as a cofactor.

Its subcellular location is the cytoplasm. It carries out the reaction alpha-D-glucosamine 1-phosphate + acetyl-CoA = N-acetyl-alpha-D-glucosamine 1-phosphate + CoA + H(+). The enzyme catalyses N-acetyl-alpha-D-glucosamine 1-phosphate + UTP + H(+) = UDP-N-acetyl-alpha-D-glucosamine + diphosphate. Its pathway is nucleotide-sugar biosynthesis; UDP-N-acetyl-alpha-D-glucosamine biosynthesis; N-acetyl-alpha-D-glucosamine 1-phosphate from alpha-D-glucosamine 6-phosphate (route II): step 2/2. It participates in nucleotide-sugar biosynthesis; UDP-N-acetyl-alpha-D-glucosamine biosynthesis; UDP-N-acetyl-alpha-D-glucosamine from N-acetyl-alpha-D-glucosamine 1-phosphate: step 1/1. The protein operates within bacterial outer membrane biogenesis; LPS lipid A biosynthesis. In terms of biological role, catalyzes the last two sequential reactions in the de novo biosynthetic pathway for UDP-N-acetylglucosamine (UDP-GlcNAc). The C-terminal domain catalyzes the transfer of acetyl group from acetyl coenzyme A to glucosamine-1-phosphate (GlcN-1-P) to produce N-acetylglucosamine-1-phosphate (GlcNAc-1-P), which is converted into UDP-GlcNAc by the transfer of uridine 5-monophosphate (from uridine 5-triphosphate), a reaction catalyzed by the N-terminal domain. The protein is Bifunctional protein GlmU of Pediococcus pentosaceus (strain ATCC 25745 / CCUG 21536 / LMG 10740 / 183-1w).